Here is a 343-residue protein sequence, read N- to C-terminus: Heme A synthase (343 aa).

A run of 8 helical transmembrane segments spans residues 13–33 (VAIW…VGGA), 96–116 (HRLL…VFLI), 130–150 (AMLG…SSGL), 161–181 (LMTH…TALD), 197–217 (GWAL…ALVA), 258–278 (FNHR…VVLA), 294–314 (AVAA…MAAV), and 318–338 (LGVL…AFAW). Histidine 260 lines the heme pocket. Residue histidine 322 participates in heme binding.

It belongs to the COX15/CtaA family. Type 2 subfamily. As to quaternary structure, interacts with CtaB. Heme b serves as cofactor.

The protein resides in the cell membrane. It catalyses the reaction Fe(II)-heme o + 2 A + H2O = Fe(II)-heme a + 2 AH2. The protein operates within porphyrin-containing compound metabolism; heme A biosynthesis; heme A from heme O: step 1/1. In terms of biological role, catalyzes the conversion of heme O to heme A by two successive hydroxylations of the methyl group at C8. The first hydroxylation forms heme I, the second hydroxylation results in an unstable dihydroxymethyl group, which spontaneously dehydrates, resulting in the formyl group of heme A. This Caulobacter vibrioides (strain ATCC 19089 / CIP 103742 / CB 15) (Caulobacter crescentus) protein is Heme A synthase.